A 191-amino-acid chain; its full sequence is MTVTNEIDAPPIPRLKQKYREEIIPALREEFGYTNIMQVPGLTKIVVNMGVGDAARDAKLIQGAIADLSAITGQKPKINRAKKSIAQFKLRQGQPIGASVTLRGDRMWEFLDRLLTLALPRIRDFRGLSAKQFDGNGNYTFGLTEQVMFHEIDPDKVDRQRGMDITIVTTAATDEEGRSLLRRLGFPFKED.

Belongs to the universal ribosomal protein uL5 family. As to quaternary structure, part of the 50S ribosomal subunit; part of the 5S rRNA/L5/L18/L25 subcomplex. Contacts the 5S rRNA and the P site tRNA. Forms a bridge to the 30S subunit in the 70S ribosome.

This is one of the proteins that bind and probably mediate the attachment of the 5S RNA into the large ribosomal subunit, where it forms part of the central protuberance. In the 70S ribosome it contacts protein S13 of the 30S subunit (bridge B1b), connecting the 2 subunits; this bridge is implicated in subunit movement. Contacts the P site tRNA; the 5S rRNA and some of its associated proteins might help stabilize positioning of ribosome-bound tRNAs. This chain is Large ribosomal subunit protein uL5, found in Thermobifida fusca (strain YX).